A 239-amino-acid chain; its full sequence is Orotidine 5'-phosphate decarboxylase (239 aa).

Substrate contacts are provided by residues Asp12, Lys34, 61-70 (DLKFHDIPNT), Thr125, Arg188, Gln197, Gly217, and Arg218. Lys63 serves as the catalytic Proton donor.

It belongs to the OMP decarboxylase family. Type 1 subfamily. Homodimer.

The catalysed reaction is orotidine 5'-phosphate + H(+) = UMP + CO2. It participates in pyrimidine metabolism; UMP biosynthesis via de novo pathway; UMP from orotate: step 2/2. Its function is as follows. Catalyzes the decarboxylation of orotidine 5'-monophosphate (OMP) to uridine 5'-monophosphate (UMP). This Syntrophomonas wolfei subsp. wolfei (strain DSM 2245B / Goettingen) protein is Orotidine 5'-phosphate decarboxylase.